A 2273-amino-acid chain; its full sequence is Linear gramicidin synthase subunit A (2273 aa).

Positions 1 to 144 are GART; sequence MRILFLTTFM…AIEELFIREW (144 aa). Carrier domains follow at residues 693–767 and 1724–1798; these read APTD…TEQK and APRT…TSEQ. O-(pantetheine 4'-phosphoryl)serine occurs at positions 728 and 1759.

Belongs to the ATP-dependent AMP-binding enzyme family. In terms of assembly, large multienzyme complex composed of 4 subunits; LgrA, LgrB, LgrC and LgrD. The cofactor is pantetheine 4'-phosphate.

Activates valine (or leucine, but much less frequently), and then glycine and catalyzes the formation of the peptide bond in the first step of peptide synthesis. This enzyme may also play a role in N-formylation of the first amino acid residue in the synthesized dipeptide. This Brevibacillus parabrevis protein is Linear gramicidin synthase subunit A (lgrA).